The sequence spans 273 residues: Homeobox protein Hox-C13b (273 aa).

Positions glycine 201 to valine 260 form a DNA-binding region, homeobox.

The protein belongs to the Abd-B homeobox family.

The protein localises to the nucleus. In terms of biological role, sequence-specific transcription factor which is part of a developmental regulatory system that provides cells with specific positional identities on the anterior-posterior axis. Plays a role in early embryonic development. The chain is Homeobox protein Hox-C13b (hoxc13b) from Danio rerio (Zebrafish).